A 249-amino-acid polypeptide reads, in one-letter code: MRVVKIGGSVISMLENLWRENGISEILGNSVIVHGGSRHVDELSRKMGVKIEKLTSPSGVTFRRTTKEVLKVYVAAMIRANKEIVEFLRNQGINAIGLTGLDRELIIGERKKLIKAVINGRVVAIRDDYSGVIKKVNTQILREYLKIGTPVIASIAYDPIENTPLNVDGDKVAYHVALAMDAKELYFLSDTAFMAGGKVVSELPADEIEKYLIFAKGGMKKKLLMAKEAINSGIKNVVIEGLNGRTVIY.

Substrate-binding residues include Arg63 and Asn166.

This sequence belongs to the acetylglutamate kinase family. LysZ subfamily.

It localises to the cytoplasm. It catalyses the reaction [amino-group carrier protein]-C-terminal-N-(1,4-dicarboxybutan-1-yl)-L-glutamine + ATP = [amino-group carrier protein]-C-terminal-N-(1-carboxy-5-phosphooxy-5-oxopentan-1-yl)-L-glutamine + ADP. It carries out the reaction [amino-group carrier protein]-C-terminal-gamma-(L-glutamyl)-L-glutamate + ATP = [amino-group carrier protein]-C-terminal-gamma-(5-phospho-L-glutamyl)-L-glutamate + ADP. Its pathway is amino-acid biosynthesis; L-lysine biosynthesis via AAA pathway; L-lysine from L-alpha-aminoadipate (Thermus route): step 2/5. The protein operates within amino-acid biosynthesis; L-arginine biosynthesis. Its function is as follows. Involved in both the arginine and lysine biosynthetic pathways. Phosphorylates the LysW-bound precursors glutamate (for arginine biosynthesis), respectively alpha-aminoadipate (for lysine biosynthesis). This chain is Putative [LysW]-aminoadipate/[LysW]-glutamate kinase, found in Pyrococcus furiosus (strain ATCC 43587 / DSM 3638 / JCM 8422 / Vc1).